The sequence spans 363 residues: NAD-dependent epimerase/dehydratase tndE (363 aa).

Residues 10–30 (GLVLITGVNGFLASHLALQLI) form a helical membrane-spanning segment. Tyrosine 176 serves as a coordination point for NADP(+).

This sequence belongs to the NAD(P)-dependent epimerase/dehydratase family. Dihydroflavonol-4-reductase subfamily.

It is found in the membrane. The protein operates within secondary metabolite biosynthesis; terpenoid biosynthesis. In terms of biological role, NAD-dependent epimerase/dehydratase; part of the gene cluster that mediates the biosynthesis of talaronoid C, a fusicoccane diterpenoid with an unprecedented tricyclic 5/8/6 ring system. The first step in the pathway is performed by the fusicoccadiene synthase tndC that possesses both prenyl transferase and terpene cyclase activity, converting isopentenyl diphosphate and dimethylallyl diphosphate into geranylgeranyl diphosphate (GGDP) and further converting GGDP into talarodiene, a precursor for talaronoid C. The remaining enzymes from the cluster include the cytochrome P450 monooxygenase tndB, the aldehyde reductase tndE and the alcohol dehydrogenase tndF that are involved in the conversion of talarodiene into talaronoid C. This Aspergillus flavipes protein is NAD-dependent epimerase/dehydratase tndE.